Reading from the N-terminus, the 1601-residue chain is Ras guanine nucleotide exchange factor glfB (1601 aa).

4 disordered regions span residues proline 43–aspartate 140, aspartate 188–threonine 256, serine 310–serine 461, and leucine 475–glycine 630. Pro residues predominate over residues leucine 45 to threonine 55. A compositionally biased stretch (polar residues) spans glutamine 57–isoleucine 69. Low complexity predominate over residues serine 70–asparagine 126. Serine 197 is modified (phosphoserine). At threonine 201 the chain carries Phosphothreonine. 2 stretches are compositionally biased toward low complexity: residues glutamine 211–threonine 256 and serine 310–valine 330. Positions alanine 331–threonine 359 are enriched in acidic residues. The segment covering proline 384–threonine 398 has biased composition (polar residues). Low complexity-rich tracts occupy residues threonine 435–alanine 458, leucine 475–isoleucine 493, and serine 500–lysine 520. A compositionally biased stretch (basic and acidic residues) spans proline 521–lysine 533. Low complexity predominate over residues valine 558–glycine 577. A compositionally biased stretch (basic and acidic residues) spans isoleucine 578 to glutamate 596. The 188-residue stretch at valine 649–phenylalanine 836 folds into the Rho-GAP domain. The N-terminal Ras-GEF domain maps to glycine 851–lysine 983. A Ras-GEF domain is found at serine 1021 to proline 1255. An N-terminal F-actin-binding domain region spans residues tyrosine 1262 to glutamate 1601. Positions serine 1443–proline 1474 are disordered. Low complexity predominate over residues glutamine 1465–proline 1474.

As to quaternary structure, interacts with gpaB and rapA. Interacts directly with F-actin. In terms of processing, simultaneously phosphorylated at Ser-197 and Thr-201 after cAMP stimulation.

The protein localises to the cytoplasm. The protein resides in the cell cortex. It localises to the cytoskeleton. It is found in the cell projection. Its subcellular location is the filopodium. The protein localises to the lamellipodium. Functionally, gpaB-activated, rapA-specific guanine nucleotide exchange factor, involved in the regulation of the balance between Ras and Rap signaling at the leading edge of chemotaxing cells. Spatially localized activation of Rap and Ras induces F-actin polymerization at the leading edge of chemotaxing cells through the Rac, PI3K, and TORC2 pathways. Also acts as a key regulator of actin-driven membrane protrusions during processes such as phagocytosis and cytokinesis, possibly by modulating rapA signaling pathways. The protein is Ras guanine nucleotide exchange factor glfB of Dictyostelium discoideum (Social amoeba).